Reading from the N-terminus, the 310-residue chain is Ribosomal RNA small subunit methyltransferase H (310 aa).

S-adenosyl-L-methionine-binding positions include 33 to 35 (AGH), Asp-53, Tyr-83, Asp-100, and Gln-107.

It belongs to the methyltransferase superfamily. RsmH family.

The protein localises to the cytoplasm. The enzyme catalyses cytidine(1402) in 16S rRNA + S-adenosyl-L-methionine = N(4)-methylcytidine(1402) in 16S rRNA + S-adenosyl-L-homocysteine + H(+). Specifically methylates the N4 position of cytidine in position 1402 (C1402) of 16S rRNA. The polypeptide is Ribosomal RNA small subunit methyltransferase H (Clostridium perfringens (strain ATCC 13124 / DSM 756 / JCM 1290 / NCIMB 6125 / NCTC 8237 / Type A)).